The primary structure comprises 284 residues: RNase adapter protein RapZ (284 aa).

8–15 (GRSGSGKS) contacts ATP. Residue 56–59 (DVRN) coordinates GTP. The segment at 266–284 (RSRGKNVQSRHRTLEKRKT) is RNA-binding.

Belongs to the RapZ-like family. RapZ subfamily. In terms of assembly, homotrimer.

Modulates the synthesis of GlmS, by affecting the processing and stability of the regulatory small RNA GlmZ. When glucosamine-6-phosphate (GlcN6P) concentrations are high in the cell, RapZ binds GlmZ and targets it to cleavage by RNase E. Consequently, GlmZ is inactivated and unable to activate GlmS synthesis. Under low GlcN6P concentrations, RapZ is sequestered and inactivated by an other regulatory small RNA, GlmY, preventing GlmZ degradation and leading to synthesis of GlmS. This chain is RNase adapter protein RapZ, found in Escherichia fergusonii (strain ATCC 35469 / DSM 13698 / CCUG 18766 / IAM 14443 / JCM 21226 / LMG 7866 / NBRC 102419 / NCTC 12128 / CDC 0568-73).